We begin with the raw amino-acid sequence, 413 residues long: MNLLTGRNMVERSSKFLFIVVGSVLFMLILYQYVAPGMMNFGSPHGYMLEDDADLFPTPDPHYVKKFYFPIRDLERTVDFEIKGDDVIVFLHIQKTGGTTFGRHLVQNVRLEVPCDCRPGQKKCTCYRPNRKETWLFSRFSTGWSCGLHADWTELTNCVPGVLNKKESRMKNQRKFYYITLLRDPVSRYLSEWRHVQRGATWKTSLHMCDGRTPTPEELPPCYEGTDWSGCTLQQFMDCPYNLANNRQVRMLADLSLVGCYNMSFIPEKKRAQVLLESAKKNLRDMAFFGLTEFQRKTQYLFERTFRLKFIRPFMQYNSTRAAGVDLDNDTIQRIEELNDLDMQLYDYARDLFQQRYMYKRQLERREQRLKNQPLFPFRRTSSSDSTFRDDAPESEGSRLPTEDYMNHIINRW.

Topologically, residues 9-15 are cytoplasmic; it reads MVERSSK. Residues 16-36 traverse the membrane as a helical; Signal-anchor for type II membrane protein segment; the sequence is FLFIVVGSVLFMLILYQYVAP. The Lumenal segment spans residues 37 to 413; the sequence is GMMNFGSPHG…DYMNHIINRW (377 aa). Position 92–100 (92–100) interacts with 3'-phosphoadenylyl sulfate; the sequence is HIQKTGGTT. Residues 122 to 123, arginine 139, tryptophan 144, and histidine 149 each bind substrate; that span reads KK. Catalysis depends on histidine 149, which acts as the Proton acceptor. 3'-phosphoadenylyl sulfate-binding residues include arginine 183 and serine 191. The substrate site is built by histidine 195 and tryptophan 202. A glycan (N-linked (GlcNAc...) asparagine) is linked at asparagine 262. 315–317 contributes to the 3'-phosphoadenylyl sulfate binding site; sequence MQY. Residue asparagine 318 is glycosylated (N-linked (GlcNAc...) asparagine). 321-322 lines the 3'-phosphoadenylyl sulfate pocket; that stretch reads RA. N-linked (GlcNAc...) asparagine glycosylation occurs at asparagine 329. The interval 374-401 is disordered; the sequence is PLFPFRRTSSSDSTFRDDAPESEGSRLP.

This sequence belongs to the sulfotransferase 6 family. In terms of tissue distribution, during somitogenesis, first expressed in polster and presumptive forebrain. During mid-somitogenesis, expressed in eye, hindbrain and anterior spinal cord. During late somitogenesis, strong expression in eye and hindbrain, decreased levels in midbrain and anterior spinal cord. At 24 hours post-fertilization (hpf), expressed in neural retina and lens, brain and anterior spinal cord. At 36 hpf, retinal expression is confined to the ciliary marginal zone and there is strong expression in tectum, rhombomeres and otic vesicle. At 48 hpf, expressed in retinal ganglion cells and in tectum, rhombomeres and pectoral fin. Not detected in the vasculature during embryogenesis.

The protein localises to the membrane. It carries out the reaction alpha-D-glucosaminyl-[heparan sulfate](n) + 3'-phosphoadenylyl sulfate = 6-sulfo-alpha-D-glucosaminyl-[heparan sulfate](n) + adenosine 3',5'-bisphosphate + H(+). Functionally, 6-O-sulfation enzyme which catalyzes the transfer of sulfate from 3'-phosphoadenosine 5'-phosphosulfate (PAPS) to position 6 of the N-sulfoglucosamine residue (GlcNS) of heparan sulfate. In Danio rerio (Zebrafish), this protein is Heparan-sulfate 6-O-sulfotransferase 1-A.